Here is a 317-residue protein sequence, read N- to C-terminus: Putative AP2/ERF and B3 domain-containing protein Os01g0140700 (317 aa).

Residues 1 to 37 (MEQEAAMVVFSCNSGSGGSSSTTDSKQEEEEEEELAA) form a disordered region. Positions 27–37 (QEEEEEEELAA) are enriched in acidic residues. The segment at residues 66–121 (RYKGVVPQPNGRWGAQIYERHARVWLGTFPDEEAAARAYDVAALRFRGRDAVTNRA) is a DNA-binding region (AP2/ERF). A DNA-binding region (TF-B3) is located at residues 178–287 (FEKAVTPSDV…EKHLLIDCKK (110 aa)).

The protein localises to the nucleus. In Oryza sativa subsp. japonica (Rice), this protein is Putative AP2/ERF and B3 domain-containing protein Os01g0140700.